The chain runs to 455 residues: tRNA modification GTPase MnmE (455 aa).

(6S)-5-formyl-5,6,7,8-tetrahydrofolate is bound at residue R22. Positions 43 to 67 are disordered; it reads RRATRAALRSPPSGPGPTGPGPEEG. (6S)-5-formyl-5,6,7,8-tetrahydrofolate contacts are provided by E92 and R132. A TrmE-type G domain is found at 228 to 381; sequence GLQVAVVGAP…LEAALESRAR (154 aa). N238 lines the K(+) pocket. GTP is bound by residues 238–243, 257–263, and 282–285; these read NVGKSS, SDIAGTT, and DTAG. Mg(2+) is bound at residue S242. K(+) is bound by residues S257, I259, and T262. T263 is a binding site for Mg(2+). K455 is a binding site for (6S)-5-formyl-5,6,7,8-tetrahydrofolate.

This sequence belongs to the TRAFAC class TrmE-Era-EngA-EngB-Septin-like GTPase superfamily. TrmE GTPase family. As to quaternary structure, homodimer. Heterotetramer of two MnmE and two MnmG subunits. Requires K(+) as cofactor.

It is found in the cytoplasm. Exhibits a very high intrinsic GTPase hydrolysis rate. Involved in the addition of a carboxymethylaminomethyl (cmnm) group at the wobble position (U34) of certain tRNAs, forming tRNA-cmnm(5)s(2)U34. The chain is tRNA modification GTPase MnmE from Rhodospirillum rubrum (strain ATCC 11170 / ATH 1.1.1 / DSM 467 / LMG 4362 / NCIMB 8255 / S1).